We begin with the raw amino-acid sequence, 423 residues long: Gamma-glutamyl phosphate reductase (423 aa).

This sequence belongs to the gamma-glutamyl phosphate reductase family.

It is found in the cytoplasm. The catalysed reaction is L-glutamate 5-semialdehyde + phosphate + NADP(+) = L-glutamyl 5-phosphate + NADPH + H(+). It participates in amino-acid biosynthesis; L-proline biosynthesis; L-glutamate 5-semialdehyde from L-glutamate: step 2/2. In terms of biological role, catalyzes the NADPH-dependent reduction of L-glutamate 5-phosphate into L-glutamate 5-semialdehyde and phosphate. The product spontaneously undergoes cyclization to form 1-pyrroline-5-carboxylate. This is Gamma-glutamyl phosphate reductase from Burkholderia pseudomallei (strain 1710b).